The following is a 551-amino-acid chain: MLPLLLLPLLWGGSLQEKPVYELQVQKSVTVQEGLCVLVPCSFSYPWRSWYSSPPLYVYWFRDGEIPYYAEVVATNNPDRRVKPETQGRFRLLGDVQKKNCSLSIGDARMEDTGSYFFRVERGRDVKYSYQQNKLNLEVTALIEKPDIHFLEPLESGRPTRLSCSLPGSCEAGPPLTFSWTGNALSPLDPETTRSSELTLTPRPEDHGTNLTCQMKRQGAQVTTERTVQLNVSYAPQTITIFRNGIALEILQNTSYLPVLEGQALRLLCDAPSNPPAHLSWFQGSPALNATPISNTGILELRRVRSAEEGGFTCRAQHPLGFLQIFLNLSVYSLPQLLGPSCSWEAEGLHCRCSFRARPAPSLCWRLEEKPLEGNSSQGSFKVNSSSAGPWANSSLILHGGLSSDLKVSCKAWNIYGSQSGSVLLLQGRSNLGTGVVPAALGGAGVMALLCICLCLIFFLIVKARRKQAAGRPEKMDDEDPIMGTITSGSRKKPWPDSPGDQASPPGDAPPLEEQKELHYASLSFSEMKSREPKDQEAPSTTEYSEIKTSK.

Positions 1–16 (MLPLLLLPLLWGGSLQ) are cleaved as a signal peptide. Residues 17–441 (EKPVYELQVQ…LGTGVVPAAL (425 aa)) lie on the Extracellular side of the membrane. An Ig-like V-type domain is found at 19 to 136 (PVYELQVQKS…KYSYQQNKLN (118 aa)). Intrachain disulfides connect cysteine 36–cysteine 170, cysteine 41–cysteine 101, and cysteine 164–cysteine 213. Asparagine 100 carries N-linked (GlcNAc...) asparagine glycosylation. N-acetylneuraminate contacts are provided by arginine 119, lysine 127, and serine 129. Residues 146–229 (PDIHFLEPLE…AQVTTERTVQ (84 aa)) enclose the Ig-like C2-type 1 domain. Positions 189–210 (DPETTRSSELTLTPRPEDHGTN) are disordered. Asparagine 210, asparagine 231, and asparagine 253 each carry an N-linked (GlcNAc...) asparagine glycan. The Ig-like C2-type 2 domain maps to 236–330 (PQTITIFRNG…GFLQIFLNLS (95 aa)). Cysteine 269 and cysteine 314 are oxidised to a cystine. Asparagine 328, asparagine 375, asparagine 384, and asparagine 393 each carry an N-linked (GlcNAc...) asparagine glycan. A helical membrane pass occupies residues 442-462 (GGAGVMALLCICLCLIFFLIV). The Cytoplasmic portion of the chain corresponds to 463 to 551 (KARRKQAAGR…TEYSEIKTSK (89 aa)). The tract at residues 469–551 (AAGRPEKMDD…TEYSEIKTSK (83 aa)) is disordered. Positions 518–523 (LHYASL) match the ITIM motif motif. The segment covering 528–537 (MKSREPKDQE) has biased composition (basic and acidic residues). Positions 542-547 (TEYSEI) match the SLAM-like motif motif.

This sequence belongs to the immunoglobulin superfamily. SIGLEC (sialic acid binding Ig-like lectin) family. As to expression, expressed by monocytic/myeloid lineage cells. Found at high levels in peripheral blood leukocytes, spleen, bone marrow and at lower levels in lymph node, lung, appendix, placenta, pancreas and thymus. Expressed by monocytes and neutrophils but absent from leukemic cell lines representing early stages of myelomonocytic differentiation.

Its subcellular location is the membrane. In terms of biological role, putative adhesion molecule that mediates sialic-acid dependent binding to cells. Binds equally to alpha-2,3-linked and alpha-2,6-linked sialic acid. The sialic acid recognition site may be masked by cis interactions with sialic acids on the same cell surface. In Homo sapiens (Human), this protein is Sialic acid-binding Ig-like lectin 5 (SIGLEC5).